Consider the following 494-residue polypeptide: Transmembrane and coiled-coil domain-containing protein 6 (494 aa).

A coiled-coil region spans residues 15–39 (GVEELRRRRREREAALRKARREQQL). 2 helical membrane passes run 338–358 (LVAALFIFLQFFLQKQPALLP) and 386–406 (PLLQLLPLSNAVCMLVLTVLC).

The protein resides in the membrane. The polypeptide is Transmembrane and coiled-coil domain-containing protein 6 (Tmco6) (Mus musculus (Mouse)).